A 350-amino-acid polypeptide reads, in one-letter code: Anthranilate phosphoribosyltransferase (350 aa).

5-phospho-alpha-D-ribose 1-diphosphate is bound by residues glycine 88, 91–92 (GD), threonine 96, 98–101 (NIST), 116–124 (KHGGRSVSS), and serine 128. Glycine 88 provides a ligand contact to anthranilate. Residue serine 100 participates in Mg(2+) binding. Position 174 (arginine 174) interacts with anthranilate. Mg(2+)-binding residues include aspartate 233 and glutamate 234.

Belongs to the anthranilate phosphoribosyltransferase family. As to quaternary structure, homodimer. Mg(2+) serves as cofactor.

The catalysed reaction is N-(5-phospho-beta-D-ribosyl)anthranilate + diphosphate = 5-phospho-alpha-D-ribose 1-diphosphate + anthranilate. It functions in the pathway amino-acid biosynthesis; L-tryptophan biosynthesis; L-tryptophan from chorismate: step 2/5. Catalyzes the transfer of the phosphoribosyl group of 5-phosphorylribose-1-pyrophosphate (PRPP) to anthranilate to yield N-(5'-phosphoribosyl)-anthranilate (PRA). This Albidiferax ferrireducens (strain ATCC BAA-621 / DSM 15236 / T118) (Rhodoferax ferrireducens) protein is Anthranilate phosphoribosyltransferase.